The chain runs to 388 residues: Processive diacylglycerol beta-glucosyltransferase (388 aa).

This sequence belongs to the glycosyltransferase 28 family. UgtP subfamily.

It is found in the cell membrane. The catalysed reaction is a 1,2-diacyl-3-O-(beta-D-glucopyranosyl)-sn-glycerol + UDP-alpha-D-glucose = a 1,2-diacyl-3-O-(beta-D-Glc-(1-&gt;6)-beta-D-Glc)-sn-glycerol + UDP + H(+). The enzyme catalyses a 1,2-diacyl-3-O-(beta-D-Glc-(1-&gt;6)-beta-D-Glc)-sn-glycerol + UDP-alpha-D-glucose = a 1,2-diacyl-3-O-(beta-D-Glc-(1-&gt;6)-beta-D-Glc-(1-&gt;6)-beta-D-Glc)-sn-glycerol + UDP + H(+). It carries out the reaction a 1,2-diacyl-sn-glycerol + UDP-alpha-D-glucose = a 1,2-diacyl-3-O-(beta-D-glucopyranosyl)-sn-glycerol + UDP + H(+). It participates in glycolipid metabolism; diglucosyl-diacylglycerol biosynthesis. Functionally, processive glucosyltransferase involved in the biosynthesis of both the bilayer- and non-bilayer-forming membrane glucolipids. Is able to successively transfer up to three glucosyl residues to diacylglycerol (DAG), thereby catalyzing the formation of beta-monoglucosyl-DAG (3-O-(beta-D-glucopyranosyl)-1,2-diacyl-sn-glycerol), beta-diglucosyl-DAG (3-O-(beta-D-glucopyranosyl-beta-(1-&gt;6)-D-glucopyranosyl)-1,2-diacyl-sn-glycerol) and beta-triglucosyl-DAG (3-O-(beta-D-glucopyranosyl-beta-(1-&gt;6)-D-glucopyranosyl-beta-(1-&gt;6)-D-glucopyranosyl)-1,2-diacyl-sn-glycerol). Beta-diglucosyl-DAG is the predominant glycolipid found in Bacillales and is also used as a membrane anchor for lipoteichoic acid (LTA). In Bacillus cereus (strain 03BB102), this protein is Processive diacylglycerol beta-glucosyltransferase.